The chain runs to 363 residues: LIM and cysteine-rich domains protein 1 (363 aa).

Residue S16 is modified to Phosphoserine. Residues M99–G206 enclose the PET domain. Positions A200–G233 are disordered. Residues P208–G220 are compositionally biased toward basic and acidic residues. 2 LIM zinc-binding domains span residues Y239 to P304 and R305 to T363.

Interacts with beta-dystroglycan. Interacts with GATA1, GATA4 and GATA6. As to expression, highly expressed in both skeletal muscle and cardiac muscle.

The protein resides in the cytoplasm. It localises to the nucleus. Functionally, transcriptional cofactor that restricts GATA6 function by inhibiting DNA-binding, resulting in repression of GATA6 transcriptional activation of downstream target genes. Represses GATA6-mediated trans activation of lung- and cardiac tissue-specific promoters. Inhibits DNA-binding by GATA4 and GATA1 to the cTNC promoter. Plays a critical role in the development of cardiac hypertrophy via activation of calcineurin/nuclear factor of activated T-cells signaling pathway. This chain is LIM and cysteine-rich domains protein 1 (LMCD1), found in Sus scrofa (Pig).